Consider the following 335-residue polypeptide: Dipeptide transport ATP-binding protein DppD (335 aa).

The region spanning 7 to 256 is the ABC transporter domain; it reads VQNLHVSFTT…PQHPYTKGLL (250 aa). ATP is bound at residue 41–48; sequence GESGCGKS.

This sequence belongs to the ABC transporter superfamily.

The protein localises to the cell membrane. It catalyses the reaction a dipeptide(out) + ATP + H2O = a dipeptide(in) + ADP + phosphate + H(+). Probably part of the ABC transporter DppBCDE involved in dipeptide transport. Responsible for energy coupling to the transport system. The sequence is that of Dipeptide transport ATP-binding protein DppD (dppD) from Bacillus subtilis (strain 168).